The following is a 416-amino-acid chain: Cyclic dinucleotide synthase CdnG (416 aa).

Serine 72 contributes to the GTP binding site. Catalysis depends on residues aspartate 89, aspartate 91, and aspartate 140. Aspartate 91 is a binding site for GTP. Aspartate 91 contacts Mg(2+). Residues 145–167 (RRRAPKEKEGEIPHAKKGTRSDP) are disordered. Basic and acidic residues predominate over residues 150–167 (KEKEGEIPHAKKGTRSDP). 5 residues coordinate GTP: lysine 236, serine 253, glutamate 305, arginine 306, and aspartate 309.

It belongs to the CD-NTase family. G10 subfamily. Requires Mg(2+) as cofactor.

It carries out the reaction UTP + GTP = 3',3'-cGMP-UMP + 2 diphosphate. It catalyses the reaction GTP + ATP = 3',3'-cGAMP + 2 diphosphate. The catalysed reaction is 2 ATP = 3',3'-c-di-AMP + 2 diphosphate. Cyclic nucleotide synthase (second messenger synthase) of a CBASS antivirus system. CBASS (cyclic oligonucleotide-based antiphage signaling system) provides immunity against bacteriophage. The CD-NTase protein synthesizes cyclic nucleotides in response to infection; these serve as specific second messenger signals. The signals activate a diverse range of effectors, leading to bacterial cell death and thus abortive phage infection. A type II-short CBASS system. In terms of biological role, cyclic dinucleotide synthase that catalyzes the synthesis of predominantly 3'3'-cGMP-UMP, followed by 3'3'-cGAMP and c-di-AMP in a reaction mixture of ATP, CTP, GTP and UTP. The cyclic nucleotide products are second messengers that activate the CBASS Cap5 effector nuclease, leading to DNA degradation and probably cell death. Cyclic nucleotides do not activate the effector equally; reactions with ATP/GTP, ATP/UTP and ATP alone activate Cap5, whereas reaction with GTP/UTP (the major in vitro product) do not. This Bradyrhizobium diazoefficiens (strain JCM 10833 / BCRC 13528 / IAM 13628 / NBRC 14792 / USDA 110) protein is Cyclic dinucleotide synthase CdnG.